We begin with the raw amino-acid sequence, 496 residues long: ATP synthase subunit beta, chloroplastic (496 aa).

An ATP-binding site is contributed by 170-177 (GGAGVGKT).

Belongs to the ATPase alpha/beta chains family. As to quaternary structure, F-type ATPases have 2 components, CF(1) - the catalytic core - and CF(0) - the membrane proton channel. CF(1) has five subunits: alpha(3), beta(3), gamma(1), delta(1), epsilon(1). CF(0) has four main subunits: a(1), b(1), b'(1) and c(9-12).

It localises to the plastid. The protein resides in the chloroplast thylakoid membrane. The catalysed reaction is ATP + H2O + 4 H(+)(in) = ADP + phosphate + 5 H(+)(out). Its function is as follows. Produces ATP from ADP in the presence of a proton gradient across the membrane. The catalytic sites are hosted primarily by the beta subunits. The polypeptide is ATP synthase subunit beta, chloroplastic (Trachycarpus fortunei (Chinese windmill palm)).